A 203-amino-acid chain; its full sequence is Holliday junction branch migration complex subunit RuvA (203 aa).

Residues 1-64 are domain I; it reads MIGRLRGIII…EDAQLLYGFN (64 aa). The domain II stretch occupies residues 65–142; the sequence is NKQERTLFKE…KGLHGDLFTP (78 aa). The flexible linker stretch occupies residues 143 to 154; the sequence is AADLVLTSPASP. A domain III region spans residues 155–203; that stretch reads ATDDAEQEAVAALVALGYKPQEASRMVSKIARPDASSETLIREALRAAL.

Belongs to the RuvA family. In terms of assembly, homotetramer. Forms an RuvA(8)-RuvB(12)-Holliday junction (HJ) complex. HJ DNA is sandwiched between 2 RuvA tetramers; dsDNA enters through RuvA and exits via RuvB. An RuvB hexamer assembles on each DNA strand where it exits the tetramer. Each RuvB hexamer is contacted by two RuvA subunits (via domain III) on 2 adjacent RuvB subunits; this complex drives branch migration. In the full resolvosome a probable DNA-RuvA(4)-RuvB(12)-RuvC(2) complex forms which resolves the HJ.

The protein localises to the cytoplasm. Its function is as follows. The RuvA-RuvB-RuvC complex processes Holliday junction (HJ) DNA during genetic recombination and DNA repair, while the RuvA-RuvB complex plays an important role in the rescue of blocked DNA replication forks via replication fork reversal (RFR). RuvA specifically binds to HJ cruciform DNA, conferring on it an open structure. The RuvB hexamer acts as an ATP-dependent pump, pulling dsDNA into and through the RuvAB complex. HJ branch migration allows RuvC to scan DNA until it finds its consensus sequence, where it cleaves and resolves the cruciform DNA. The polypeptide is Holliday junction branch migration complex subunit RuvA (Shigella boydii serotype 18 (strain CDC 3083-94 / BS512)).